A 430-amino-acid polypeptide reads, in one-letter code: Adenylosuccinate synthetase (430 aa).

Residues 12 to 18 (GDEGKGK) and 40 to 42 (GHT) each bind GTP. Residue aspartate 13 is the Proton acceptor of the active site. Mg(2+) is bound by residues aspartate 13 and glycine 40. Residues 13-16 (DEGK), 38-41 (NAGH), threonine 130, arginine 144, glutamine 225, threonine 240, and arginine 304 each bind IMP. The Proton donor role is filled by histidine 41. 300-306 (STTGRPR) is a binding site for substrate. GTP contacts are provided by residues arginine 306, 332–334 (KLD), and 414–416 (SVG).

This sequence belongs to the adenylosuccinate synthetase family. In terms of assembly, homodimer. The cofactor is Mg(2+).

The protein resides in the cytoplasm. The catalysed reaction is IMP + L-aspartate + GTP = N(6)-(1,2-dicarboxyethyl)-AMP + GDP + phosphate + 2 H(+). The protein operates within purine metabolism; AMP biosynthesis via de novo pathway; AMP from IMP: step 1/2. Plays an important role in the de novo pathway of purine nucleotide biosynthesis. Catalyzes the first committed step in the biosynthesis of AMP from IMP. The chain is Adenylosuccinate synthetase from Pelobacter propionicus (strain DSM 2379 / NBRC 103807 / OttBd1).